The sequence spans 543 residues: Hydroxylamine reductase (543 aa).

Residues C3, C6, C15, and C21 each coordinate [4Fe-4S] cluster. H244, E268, C312, C399, C427, C452, E486, and K488 together coordinate hybrid [4Fe-2O-2S] cluster. The residue at position 399 (C399) is a Cysteine persulfide.

It belongs to the HCP family. Requires [4Fe-4S] cluster as cofactor. Hybrid [4Fe-2O-2S] cluster is required as a cofactor.

The protein localises to the cytoplasm. The enzyme catalyses A + NH4(+) + H2O = hydroxylamine + AH2 + H(+). Catalyzes the reduction of hydroxylamine to form NH(3) and H(2)O. The sequence is that of Hydroxylamine reductase from Methanocella arvoryzae (strain DSM 22066 / NBRC 105507 / MRE50).